Reading from the N-terminus, the 104-residue chain is Iron-sulfur cluster assembly protein CyaY (104 aa).

This sequence belongs to the frataxin family.

In terms of biological role, involved in iron-sulfur (Fe-S) cluster assembly. May act as a regulator of Fe-S biogenesis. The protein is Iron-sulfur cluster assembly protein CyaY of Vibrio vulnificus (strain CMCP6).